Reading from the N-terminus, the 239-residue chain is Lipoprotein-releasing system ATP-binding protein LolD (239 aa).

Positions 14 to 239 constitute an ABC transporter domain; the sequence is IRAERLGKTY…KLRELAPSAV (226 aa). 50–57 serves as a coordination point for ATP; that stretch reads GASGAGKS.

Belongs to the ABC transporter superfamily. Lipoprotein translocase (TC 3.A.1.125) family. The complex is composed of two ATP-binding proteins (LolD) and two transmembrane proteins (LolC and LolE).

The protein resides in the cell inner membrane. Part of the ABC transporter complex LolCDE involved in the translocation of mature outer membrane-directed lipoproteins, from the inner membrane to the periplasmic chaperone, LolA. Responsible for the formation of the LolA-lipoprotein complex in an ATP-dependent manner. In Xanthomonas campestris pv. campestris (strain 8004), this protein is Lipoprotein-releasing system ATP-binding protein LolD.